We begin with the raw amino-acid sequence, 183 residues long: Capsid protein (183 aa).

A disordered region spans residues 136-183 (NAPILSTLPETTVVRRRGRSPRRRTPSPRRRRSQSPRRRRSQSRESQC). Residues 149-176 (VRRRGRSPRRRTPSPRRRRSQSPRRRRS) are compositionally biased toward basic residues. Residues Ser-155, Ser-162, and Ser-170 each carry the phosphoserine; by host modification. A 1; half-length repeat occupies 155–161 (SPRRRTP). A 3 X 8 AA repeats of S-P-R-R-R-[PR]-S-Q region spans residues 155-177 (SPRRRTPSPRRRRSQSPRRRRSQ). The Bipartite nuclear localization signal signature appears at 158-175 (RRTPSPRRRRSQSPRRRR). 2 repeat units span residues 162-169 (SPRRRRSQ) and 170-177 (SPRRRRSQ). The interval 177-183 (QSRESQC) is RNA binding.

It belongs to the orthohepadnavirus core antigen family. As to quaternary structure, homodimerizes, then multimerizes. Interacts with cytosol exposed regions of viral L glycoprotein present in the reticulum-to-Golgi compartment. Interacts with human FLNB. Phosphorylated form interacts with host importin alpha; this interaction depends on the exposure of the NLS, which itself depends upon genome maturation and/or phosphorylation of the capsid protein. Interacts with host NUP153. Phosphorylated by host SRPK1, SRPK2, and maybe protein kinase C or GAPDH. Phosphorylation is critical for pregenomic RNA packaging. Protein kinase C phosphorylation is stimulated by HBx protein and may play a role in transport of the viral genome to the nucleus at the late step during the viral replication cycle.

It is found in the virion. It localises to the host cytoplasm. In terms of biological role, self assembles to form an icosahedral capsid. Most capsids appear to be large particles with an icosahedral symmetry of T=4 and consist of 240 copies of capsid protein, though a fraction forms smaller T=3 particles consisting of 180 capsid proteins. Entering capsids are transported along microtubules to the nucleus. Phosphorylation of the capsid is thought to induce exposure of nuclear localization signal in the C-terminal portion of the capsid protein that allows binding to the nuclear pore complex via the importin (karyopherin-) alpha and beta. Capsids are imported in intact form through the nuclear pore into the nuclear basket, where it probably binds NUP153. Only capsids that contain the mature viral genome can release the viral DNA and capsid protein into the nucleoplasm. Immature capsids get stuck in the basket. Capsids encapsulate the pre-genomic RNA and the P protein. Pre-genomic RNA is reverse-transcribed into DNA while the capsid is still in the cytoplasm. The capsid can then either be directed to the nucleus, providing more genomes for transcription, or bud through the endoplasmic reticulum to provide new virions. The protein is Capsid protein of Homo sapiens (Human).